The sequence spans 391 residues: uncharacterized protein (391 aa).

The next 12 membrane-spanning stretches (helical) occupy residues 7-27, 39-59, 66-88, 92-111, 131-151, 156-176, 197-217, 239-259, 269-289, 292-312, 329-349, and 356-376; these read FILV…LPVI, AING…SPFM, LGFK…GFIW, VWVW…MLHF, SIYG…VPLV, SLPF…VFFL, FYQA…YGFL, VAII…PLGI, VLLV…VFPS, VIGG…TLGI, LLCG…GGWY, and ANLF…LVLG.

It belongs to the major facilitator superfamily.

Its subcellular location is the cell membrane. This is an uncharacterized protein from Bacillus subtilis (strain 168).